The following is a 313-amino-acid chain: Ribosomal RNA small subunit methyltransferase H (313 aa).

Residues 36–38 (GGH), Asp-56, Phe-80, Asp-102, and Gln-109 each bind S-adenosyl-L-methionine.

It belongs to the methyltransferase superfamily. RsmH family.

It localises to the cytoplasm. The enzyme catalyses cytidine(1402) in 16S rRNA + S-adenosyl-L-methionine = N(4)-methylcytidine(1402) in 16S rRNA + S-adenosyl-L-homocysteine + H(+). In terms of biological role, specifically methylates the N4 position of cytidine in position 1402 (C1402) of 16S rRNA. This Actinobacillus pleuropneumoniae serotype 3 (strain JL03) protein is Ribosomal RNA small subunit methyltransferase H.